The primary structure comprises 562 residues: Sesquiterpene synthase (562 aa).

Asp315, Asp319, and Glu467 together coordinate Mg(2+). Positions 315–319 (DDIYD) match the DDXXD motif motif.

This sequence belongs to the terpene synthase family. Tpsa subfamily. Mg(2+) is required as a cofactor. The cofactor is Mn(2+).

Functionally, catalyzes the formation of beta-elemol, guaiol and bulnesol. In Santalum spicatum (Australian sandalwood), this protein is Sesquiterpene synthase.